We begin with the raw amino-acid sequence, 360 residues long: Photosystem II protein D1 2 (360 aa).

The next 3 membrane-spanning stretches (helical) occupy residues 29 to 46 (YIGW…AATI), 118 to 133 (HFLI…EWEL), and 142 to 156 (WIPV…AATA). A chlorophyll a-binding site is contributed by H118. Y126 serves as a coordination point for pheophytin a. [CaMn4O5] cluster-binding residues include D170 and E189. Residues 197 to 218 (FHMLGVAGVFGGALFAAMHGSL) form a helical membrane-spanning segment. Chlorophyll a is bound at residue H198. Residues H215 and 264–265 (SF) each bind a quinone. H215 contributes to the Fe cation binding site. Residue H272 participates in Fe cation binding. A helical transmembrane segment spans residues 274–288 (FLAAWPVVGIWFAAL). [CaMn4O5] cluster is bound by residues H332, E333, D342, and A344. A propeptide spanning residues 345–360 (SGELAPVAMIAPSIEA) is cleaved from the precursor.

This sequence belongs to the reaction center PufL/M/PsbA/D family. As to quaternary structure, PSII is composed of 1 copy each of membrane proteins PsbA, PsbB, PsbC, PsbD, PsbE, PsbF, PsbH, PsbI, PsbJ, PsbK, PsbL, PsbM, PsbT, PsbX, PsbY, PsbZ, Psb30/Ycf12, peripheral proteins PsbO, CyanoQ (PsbQ), PsbU, PsbV and a large number of cofactors. It forms dimeric complexes. It depends on The D1/D2 heterodimer binds P680, chlorophylls that are the primary electron donor of PSII, and subsequent electron acceptors. It shares a non-heme iron and each subunit binds pheophytin, quinone, additional chlorophylls, carotenoids and lipids. D1 provides most of the ligands for the Mn4-Ca-O5 cluster of the oxygen-evolving complex (OEC). There is also a Cl(-1) ion associated with D1 and D2, which is required for oxygen evolution. The PSII complex binds additional chlorophylls, carotenoids and specific lipids. as a cofactor. Post-translationally, tyr-161 forms a radical intermediate that is referred to as redox-active TyrZ, YZ or Y-Z. C-terminally processed by CtpA; processing is essential to allow assembly of the oxygen-evolving complex and thus photosynthetic growth.

Its subcellular location is the cellular thylakoid membrane. The catalysed reaction is 2 a plastoquinone + 4 hnu + 2 H2O = 2 a plastoquinol + O2. Functionally, photosystem II (PSII) is a light-driven water:plastoquinone oxidoreductase that uses light energy to abstract electrons from H(2)O, generating O(2) and a proton gradient subsequently used for ATP formation. It consists of a core antenna complex that captures photons, and an electron transfer chain that converts photonic excitation into a charge separation. The D1/D2 (PsbA/PsbD) reaction center heterodimer binds P680, the primary electron donor of PSII as well as several subsequent electron acceptors. This Synechococcus elongatus protein is Photosystem II protein D1 2.